The sequence spans 117 residues: DNA-binding protein MK1619 (117 aa).

Belongs to the PDCD5 family.

The protein is DNA-binding protein MK1619 of Methanopyrus kandleri (strain AV19 / DSM 6324 / JCM 9639 / NBRC 100938).